The sequence spans 200 residues: Mediator of RNA polymerase II transcription subunit 22 (200 aa).

Positions 93-122 (SVNEAIDQRNQQLRALQEECDRKLITLRDE) form a coiled coil. Residues 169–200 (PLLASPETGAGPLQSAAPVHSHGGGPGPTEHT) form a disordered region. A compositionally biased stretch (gly residues) spans 190-200 (HGGGPGPTEHT).

It belongs to the Mediator complex subunit 22 family. In terms of assembly, component of the Mediator complex, which is composed of MED1, MED4, MED6, MED7, MED8, MED9, MED10, MED11, MED12, MED13, MED13L, MED14, MED15, MED16, MED17, MED18, MED19, MED20, MED21, MED22, MED23, MED24, MED25, MED26, MED27, MED29, MED30, MED31, CCNC, CDK8 and CDC2L6/CDK11. The MED12, MED13, CCNC and CDK8 subunits form a distinct module termed the CDK8 module. Mediator containing the CDK8 module is less active than Mediator lacking this module in supporting transcriptional activation. Individual preparations of the Mediator complex lacking one or more distinct subunits have been variously termed ARC, CRSP, DRIP, PC2, SMCC and TRAP.

Its subcellular location is the nucleus. Its function is as follows. Component of the Mediator complex, a coactivator involved in the regulated transcription of nearly all RNA polymerase II-dependent genes. Mediator functions as a bridge to convey information from gene-specific regulatory proteins to the basal RNA polymerase II transcription machinery. Mediator is recruited to promoters by direct interactions with regulatory proteins and serves as a scaffold for the assembly of a functional preinitiation complex with RNA polymerase II and the general transcription factors. The polypeptide is Mediator of RNA polymerase II transcription subunit 22 (Med22) (Mus musculus (Mouse)).